The primary structure comprises 181 residues: Major urinary protein (181 aa).

The signal sequence occupies residues 1–19 (MKLLLLLLCLGLTLVCGHA). Residue N54 is glycosylated (N-linked (GlcNAc...) asparagine). C83 and C176 are oxidised to a cystine.

The protein belongs to the calycin superfamily. Lipocalin family. Abundant in the urine of adult male rats but absent from that of females.

The protein resides in the cytoplasm. The protein localises to the cytosol. It localises to the secreted. In terms of biological role, major urinary proteins (Mups) bind and release pheromones. They may also protect pheromones from oxidation. In this context, they play a role in the regulation of social behaviors, such as aggression, mating, pup-suckling, territory establishment and dominance. Acts as a kairomone, detected by the prey vomeronasal organ and inducing fear reactions in mice. The chain is Major urinary protein from Rattus norvegicus (Rat).